A 166-amino-acid chain; its full sequence is Small ribosomal subunit protein uS5 (166 aa).

The S5 DRBM domain maps to 12–75 (YIEKLVQVNR…EAARRNMIQV (64 aa)).

Belongs to the universal ribosomal protein uS5 family. Part of the 30S ribosomal subunit. Contacts proteins S4 and S8.

In terms of biological role, with S4 and S12 plays an important role in translational accuracy. Located at the back of the 30S subunit body where it stabilizes the conformation of the head with respect to the body. The sequence is that of Small ribosomal subunit protein uS5 from Pseudomonas fluorescens (strain SBW25).